The following is a 209-amino-acid chain: Thiamine-phosphate synthase (209 aa).

4-amino-2-methyl-5-(diphosphooxymethyl)pyrimidine contacts are provided by residues 41-45 and N73; that span reads QYRNK. 2 residues coordinate Mg(2+): D74 and D93. Residue S112 participates in 4-amino-2-methyl-5-(diphosphooxymethyl)pyrimidine binding. Residue 139 to 141 coordinates 2-[(2R,5Z)-2-carboxy-4-methylthiazol-5(2H)-ylidene]ethyl phosphate; it reads SST. K142 lines the 4-amino-2-methyl-5-(diphosphooxymethyl)pyrimidine pocket. G168 serves as a coordination point for 2-[(2R,5Z)-2-carboxy-4-methylthiazol-5(2H)-ylidene]ethyl phosphate.

Belongs to the thiamine-phosphate synthase family. The cofactor is Mg(2+).

The catalysed reaction is 2-[(2R,5Z)-2-carboxy-4-methylthiazol-5(2H)-ylidene]ethyl phosphate + 4-amino-2-methyl-5-(diphosphooxymethyl)pyrimidine + 2 H(+) = thiamine phosphate + CO2 + diphosphate. It catalyses the reaction 2-(2-carboxy-4-methylthiazol-5-yl)ethyl phosphate + 4-amino-2-methyl-5-(diphosphooxymethyl)pyrimidine + 2 H(+) = thiamine phosphate + CO2 + diphosphate. It carries out the reaction 4-methyl-5-(2-phosphooxyethyl)-thiazole + 4-amino-2-methyl-5-(diphosphooxymethyl)pyrimidine + H(+) = thiamine phosphate + diphosphate. It participates in cofactor biosynthesis; thiamine diphosphate biosynthesis; thiamine phosphate from 4-amino-2-methyl-5-diphosphomethylpyrimidine and 4-methyl-5-(2-phosphoethyl)-thiazole: step 1/1. Its function is as follows. Condenses 4-methyl-5-(beta-hydroxyethyl)thiazole monophosphate (THZ-P) and 2-methyl-4-amino-5-hydroxymethyl pyrimidine pyrophosphate (HMP-PP) to form thiamine monophosphate (TMP). The chain is Thiamine-phosphate synthase from Methylobacillus flagellatus (strain ATCC 51484 / DSM 6875 / VKM B-1610 / KT).